We begin with the raw amino-acid sequence, 908 residues long: Metabotropic glutamate receptor 8 (908 aa).

The first 33 residues, 1–33 (MVCEGKRSASCPCFFLLTAKFYWILTMMQRTHS), serve as a signal peptide directing secretion. Residues 34–583 (QEYAHSIRVD…IIKLEWHSPW (550 aa)) are Extracellular-facing. A disulfide bridge connects residues Cys-64 and Cys-106. Residue Asn-95 is glycosylated (N-linked (GlcNAc...) asparagine). Residues Ser-156, 177 to 179 (AST), and Tyr-227 contribute to the L-glutamate site. Cystine bridges form between Cys-246/Cys-534, Cys-369/Cys-384, Cys-424/Cys-431, Cys-516/Cys-535, Cys-520/Cys-538, Cys-541/Cys-553, and Cys-556/Cys-569. Asn-298 is a glycosylation site (N-linked (GlcNAc...) asparagine). Asp-309 is a binding site for L-glutamate. Lys-401 provides a ligand contact to L-glutamate. N-linked (GlcNAc...) asparagine glycans are attached at residues Asn-452 and Asn-480. N-linked (GlcNAc...) asparagine glycosylation is present at Asn-565. A helical transmembrane segment spans residues 584–608 (AVVPVFVAILGIIATTFVIVTFVRY). Residues 609-620 (NDTPIVRASGRE) lie on the Cytoplasmic side of the membrane. A helical membrane pass occupies residues 621-641 (LSYVLLTGIFLCYSITFLMIA). Residues 642-647 (APDTII) lie on the Extracellular side of the membrane. Residues 648–668 (CSFRRVFLGLGMCFSYAALLT) traverse the membrane as a helical segment. Over 669 to 695 (KTNRIHRIFEQGKKSVTAPKFISPASQ) the chain is Cytoplasmic. Residues 696–716 (LVITFSLISVQLLGVFVWFVV) form a helical membrane-spanning segment. Residues 717–746 (DPPHIIIDYGEQRTLDPEKARGVLKCDISD) are Extracellular-facing. Residues 747–768 (LSLICSLGYSILLMVTCTVYAI) form a helical membrane-spanning segment. The Cytoplasmic segment spans residues 769–781 (KTRGVPETFNEAK). A helical membrane pass occupies residues 782-803 (PIGFTMYTTCIIWLAFIPIFFG). The Extracellular segment spans residues 804–818 (TAQSAEKMYIQTTTL). A helical membrane pass occupies residues 819–843 (TVSMSLSASVSLGMLYMPKVYIIIF). At 844–908 (HPEQNVQKRK…TYISYSNHSI (65 aa)) the chain is on the cytoplasmic side. Lys-882 participates in a covalent cross-link: Glycyl lysine isopeptide (Lys-Gly) (interchain with G-Cter in SUMO1).

It belongs to the G-protein coupled receptor 3 family. In terms of assembly, interacts with PICK1.

It is found in the cell membrane. In terms of biological role, G-protein coupled receptor for glutamate. Ligand binding causes a conformation change that triggers signaling via guanine nucleotide-binding proteins (G proteins) and modulates the activity of down-stream effectors, such as adenylate cyclase. Signaling inhibits adenylate cyclase activity. This Homo sapiens (Human) protein is Metabotropic glutamate receptor 8 (GRM8).